Reading from the N-terminus, the 164-residue chain is Small ribosomal subunit protein uS5 (164 aa).

An S5 DRBM domain is found at 10–73; the sequence is LEERVVAINR…EAAKKNMIEV (64 aa).

It belongs to the universal ribosomal protein uS5 family. In terms of assembly, part of the 30S ribosomal subunit. Contacts proteins S4 and S8.

Its function is as follows. With S4 and S12 plays an important role in translational accuracy. Functionally, located at the back of the 30S subunit body where it stabilizes the conformation of the head with respect to the body. This is Small ribosomal subunit protein uS5 from Streptococcus pyogenes serotype M1.